We begin with the raw amino-acid sequence, 49 residues long: Large ribosomal subunit protein bL33 (49 aa).

Belongs to the bacterial ribosomal protein bL33 family.

The chain is Large ribosomal subunit protein bL33 from Streptococcus gordonii (strain Challis / ATCC 35105 / BCRC 15272 / CH1 / DL1 / V288).